We begin with the raw amino-acid sequence, 106 residues long: Colipase A (106 aa).

Residues 1–11 form the signal peptide; it reads LLLVALAVAYA. Positions 12–16 are cleaved as a propeptide — enterostatin, activation peptide; that stretch reads VPDPR. Intrachain disulfides connect C28-C39, C34-C50, C38-C72, C60-C80, and C74-C98. A taurodeoxycholate-binding site is contributed by W63.

Belongs to the colipase family. In terms of assembly, forms a 1:1 stoichiometric complex with pancreatic lipase. As to expression, expressed by the pancreas.

Its subcellular location is the secreted. In terms of biological role, colipase is a cofactor of pancreatic lipase. It allows the lipase to anchor itself to the lipid-water interface. Without colipase the enzyme is washed off by bile salts, which have an inhibitory effect on the lipase. Its function is as follows. Enterostatin has a biological activity as a satiety signal. In Equus caballus (Horse), this protein is Colipase A (CLPS1).